Consider the following 154-residue polypeptide: Yop proteins translocation protein O (154 aa).

Residues 132–154 (ELNQQHYQEEQEQEEFLQHHRNA) are disordered.

The protein belongs to the SpaM family.

In terms of biological role, component of the yop secretion machinery. This Yersinia pseudotuberculosis serotype I (strain IP32953) protein is Yop proteins translocation protein O (yscO).